The following is a 126-amino-acid chain: Aspartate 1-decarboxylase (126 aa).

The active-site Schiff-base intermediate with substrate; via pyruvic acid is Ser-25. Ser-25 bears the Pyruvic acid (Ser) mark. Thr-57 lines the substrate pocket. Tyr-58 acts as the Proton donor in catalysis. 73–75 (GGA) provides a ligand contact to substrate.

It belongs to the PanD family. As to quaternary structure, heterooctamer of four alpha and four beta subunits. Requires pyruvate as cofactor. In terms of processing, is synthesized initially as an inactive proenzyme, which is activated by self-cleavage at a specific serine bond to produce a beta-subunit with a hydroxyl group at its C-terminus and an alpha-subunit with a pyruvoyl group at its N-terminus.

The protein localises to the cytoplasm. The catalysed reaction is L-aspartate + H(+) = beta-alanine + CO2. The protein operates within cofactor biosynthesis; (R)-pantothenate biosynthesis; beta-alanine from L-aspartate: step 1/1. In terms of biological role, catalyzes the pyruvoyl-dependent decarboxylation of aspartate to produce beta-alanine. The sequence is that of Aspartate 1-decarboxylase from Acinetobacter baumannii (strain ACICU).